The primary structure comprises 434 residues: Gamma-glutamyl phosphate reductase (434 aa).

The protein belongs to the gamma-glutamyl phosphate reductase family.

The protein localises to the cytoplasm. The enzyme catalyses L-glutamate 5-semialdehyde + phosphate + NADP(+) = L-glutamyl 5-phosphate + NADPH + H(+). It participates in amino-acid biosynthesis; L-proline biosynthesis; L-glutamate 5-semialdehyde from L-glutamate: step 2/2. Catalyzes the NADPH-dependent reduction of L-glutamate 5-phosphate into L-glutamate 5-semialdehyde and phosphate. The product spontaneously undergoes cyclization to form 1-pyrroline-5-carboxylate. The polypeptide is Gamma-glutamyl phosphate reductase (Pelotomaculum thermopropionicum (strain DSM 13744 / JCM 10971 / SI)).